The sequence spans 675 residues: NADH-ubiquinone oxidoreductase 75 kDa subunit (675 aa).

Residues 2-80 (KNISFKVNDF…SMNIYTNTLK (79 aa)) enclose the 2Fe-2S ferredoxin-type domain. The [2Fe-2S] cluster site is built by cysteine 36, cysteine 47, cysteine 50, and cysteine 64. Positions 80–119 (KVKKARESVLEFLLANHPLDCPICDQGGECDLQDQSVVFG) constitute a 4Fe-4S His(Cys)3-ligated-type domain. Positions 96, 100, 103, 109, 148, 151, 154, and 198 each coordinate [4Fe-4S] cluster. Positions 217-273 (LKSYNSIDVLDSLHSNIRVDIRGTKIMRILPRVNSELNEDWITDKIRFSYDSFRRQR) constitute a 4Fe-4S Mo/W bis-MGD-type domain.

This sequence belongs to the complex I 75 kDa subunit family. Complex I is composed of about 30 different subunits. Requires [2Fe-2S] cluster as cofactor. [4Fe-4S] cluster serves as cofactor.

It is found in the mitochondrion inner membrane. It carries out the reaction a ubiquinone + NADH + 5 H(+)(in) = a ubiquinol + NAD(+) + 4 H(+)(out). Core subunit of the mitochondrial membrane respiratory chain NADH dehydrogenase (Complex I) that is believed to belong to the minimal assembly required for catalysis. Complex I functions in the transfer of electrons from NADH to the respiratory chain. The immediate electron acceptor for the enzyme is believed to be ubiquinone. This is the largest subunit of complex I and it is a component of the iron-sulfur (IP) fragment of the enzyme. It may form part of the active site crevice where NADH is oxidized. This Acanthamoeba castellanii (Amoeba) protein is NADH-ubiquinone oxidoreductase 75 kDa subunit (NAD11).